The chain runs to 330 residues: GMP reductase (330 aa).

C180 serves as the catalytic Thioimidate intermediate. 209 to 232 (LIADGGIRHNGDIAKSVRFGASMV) provides a ligand contact to NADP(+).

This sequence belongs to the IMPDH/GMPR family. GuaC type 2 subfamily.

It catalyses the reaction IMP + NH4(+) + NADP(+) = GMP + NADPH + 2 H(+). Its function is as follows. Catalyzes the irreversible NADPH-dependent deamination of GMP to IMP. It functions in the conversion of nucleobase, nucleoside and nucleotide derivatives of G to A nucleotides, and in maintaining the intracellular balance of A and G nucleotides. This Lactobacillus delbrueckii subsp. bulgaricus (strain ATCC BAA-365 / Lb-18) protein is GMP reductase.